We begin with the raw amino-acid sequence, 62 residues long: Photosystem II reaction center protein Z (62 aa).

The next 2 membrane-spanning stretches (helical) occupy residues L8–A28 and Y41–I61.

Belongs to the PsbZ family. As to quaternary structure, PSII is composed of 1 copy each of membrane proteins PsbA, PsbB, PsbC, PsbD, PsbE, PsbF, PsbH, PsbI, PsbJ, PsbK, PsbL, PsbM, PsbT, sbX, PsbY, PsbZ, Psb30/Ycf12, at least 3 peripheral proteins of the oxygen-evolving complex and a large number of cofactors. It forms dimeric complexes.

It localises to the plastid. Its subcellular location is the chloroplast thylakoid membrane. In terms of biological role, may control the interaction of photosystem II (PSII) cores with the light-harvesting antenna, regulates electron flow through the 2 photosystem reaction centers. PSII is a light-driven water plastoquinone oxidoreductase, using light energy to abstract electrons from H(2)O, generating a proton gradient subsequently used for ATP formation. This chain is Photosystem II reaction center protein Z, found in Gracilaria tenuistipitata var. liui (Red alga).